We begin with the raw amino-acid sequence, 341 residues long: tRNA N6-adenosine threonylcarbamoyltransferase (341 aa).

Fe cation contacts are provided by H111 and H115. Substrate contacts are provided by residues 134 to 138 (LVSGG), D167, G180, and N276. Position 304 (D304) interacts with Fe cation.

Belongs to the KAE1 / TsaD family. The cofactor is Fe(2+).

The protein resides in the cytoplasm. It carries out the reaction L-threonylcarbamoyladenylate + adenosine(37) in tRNA = N(6)-L-threonylcarbamoyladenosine(37) in tRNA + AMP + H(+). Required for the formation of a threonylcarbamoyl group on adenosine at position 37 (t(6)A37) in tRNAs that read codons beginning with adenine. Is involved in the transfer of the threonylcarbamoyl moiety of threonylcarbamoyl-AMP (TC-AMP) to the N6 group of A37, together with TsaE and TsaB. TsaD likely plays a direct catalytic role in this reaction. This chain is tRNA N6-adenosine threonylcarbamoyltransferase, found in Pseudomonas putida (strain ATCC 700007 / DSM 6899 / JCM 31910 / BCRC 17059 / LMG 24140 / F1).